Here is a 154-residue protein sequence, read N- to C-terminus: UPF0756 membrane protein BLi03063/BL00400 (154 aa).

4 consecutive transmembrane segments (helical) span residues 8–28 (FLIL…IIAV), 54–74 (WGVT…EIGF), 87–107 (WIAL…ITLL), and 117–137 (LVFG…GPLI).

The protein belongs to the UPF0756 family.

Its subcellular location is the cell membrane. The protein is UPF0756 membrane protein BLi03063/BL00400 of Bacillus licheniformis (strain ATCC 14580 / DSM 13 / JCM 2505 / CCUG 7422 / NBRC 12200 / NCIMB 9375 / NCTC 10341 / NRRL NRS-1264 / Gibson 46).